Here is a 598-residue protein sequence, read N- to C-terminus: Elongation factor 4 (598 aa).

A tr-type G domain is found at 4 to 186 (KHIRNFSIIA…VIVRQIPPPE (183 aa)). Residues 16-21 (DHGKST) and 133-136 (NKID) each bind GTP.

This sequence belongs to the TRAFAC class translation factor GTPase superfamily. Classic translation factor GTPase family. LepA subfamily.

It localises to the cell inner membrane. It carries out the reaction GTP + H2O = GDP + phosphate + H(+). Required for accurate and efficient protein synthesis under certain stress conditions. May act as a fidelity factor of the translation reaction, by catalyzing a one-codon backward translocation of tRNAs on improperly translocated ribosomes. Back-translocation proceeds from a post-translocation (POST) complex to a pre-translocation (PRE) complex, thus giving elongation factor G a second chance to translocate the tRNAs correctly. Binds to ribosomes in a GTP-dependent manner. This is Elongation factor 4 from Pseudoalteromonas atlantica (strain T6c / ATCC BAA-1087).